The primary structure comprises 297 residues: TGF-beta receptor type-2 (297 aa).

An N-terminal signal peptide occupies residues 1–23; sequence MGRGLLGGLWPLHVVLWTRIAST. The Extracellular portion of the chain corresponds to 24–166; that stretch reads IPPHVPKSVN…NPDLLLVIFQ (143 aa). 6 disulfide bridges follow: Cys51–Cys84, Cys54–Cys71, Cys61–Cys67, Cys77–Cys101, Cys121–Cys136, and Cys138–Cys143. N-linked (GlcNAc...) asparagine glycosylation is found at Asn70 and Asn94. The chain crosses the membrane as a helical span at residues 167-187; the sequence is VTGVSLLPPLGIAIAVIITFY. Residues 188–297 lie on the Cytoplasmic side of the membrane; sequence CYRVHRQQKL…KTEKDIFSDL (110 aa). In terms of domain architecture, Protein kinase spans 244-297; that stretch reads IELDTLVGKGRFAEVYKAKLRQNTSEQFETVAVKIFPYEEYASWKTEKDIFSDL. ATP-binding positions include 250–258 and Lys277; that span reads VGKGRFAEV.

The protein belongs to the protein kinase superfamily. TKL Ser/Thr protein kinase family. TGFB receptor subfamily. As to quaternary structure, homodimer. Heterohexamer; TGFB1, TGFB2 and TGFB3 homodimeric ligands assemble a functional receptor composed of two TGFBR1 and TGFBR2 heterodimers to form a ligand-receptor heterohexamer. The respective affinity of TGFRB1 and TGFRB2 for the ligands may modulate the kinetics of assembly of the receptor and may explain the different biological activities of TGFB1, TGFB2 and TGFB3. Component of a complex composed of TSC22D1 (via N-terminus), TGFBR1 and TGFBR2; the interaction between TSC22D1 and TGFBR1 is inhibited by SMAD7 and promoted by TGFB1. Interacts with DAXX. Interacts with DYNLT4. Interacts with ZFYVE9; ZFYVE9 recruits SMAD2 and SMAD3 to the TGF-beta receptor. Interacts with and is activated by SCUBE3; this interaction does not affect TGFB1-binding to TGFBR2. Interacts with VPS39; this interaction is independent of the receptor kinase activity and of the presence of TGF-beta. Interacts with CLU. It depends on Mg(2+) as a cofactor. Mn(2+) is required as a cofactor. Post-translationally, phosphorylated on a Ser/Thr residue in the cytoplasmic domain.

It is found in the cell membrane. Its subcellular location is the membrane raft. The catalysed reaction is L-threonyl-[receptor-protein] + ATP = O-phospho-L-threonyl-[receptor-protein] + ADP + H(+). It catalyses the reaction L-seryl-[receptor-protein] + ATP = O-phospho-L-seryl-[receptor-protein] + ADP + H(+). In terms of biological role, transmembrane serine/threonine kinase forming with the TGF-beta type I serine/threonine kinase receptor, TGFBR1, the non-promiscuous receptor for the TGF-beta cytokines TGFB1, TGFB2 and TGFB3. Transduces the TGFB1, TGFB2 and TGFB3 signal from the cell surface to the cytoplasm and is thus regulating a plethora of physiological and pathological processes including cell cycle arrest in epithelial and hematopoietic cells, control of mesenchymal cell proliferation and differentiation, wound healing, extracellular matrix production, immunosuppression and carcinogenesis. The formation of the receptor complex composed of 2 TGFBR1 and 2 TGFBR2 molecules symmetrically bound to the cytokine dimer results in the phosphorylation and the activation of TGFRB1 by the constitutively active TGFBR2. Activated TGFBR1 phosphorylates SMAD2 which dissociates from the receptor and interacts with SMAD4. The SMAD2-SMAD4 complex is subsequently translocated to the nucleus where it modulates the transcription of the TGF-beta-regulated genes. This constitutes the canonical SMAD-dependent TGF-beta signaling cascade. Also involved in non-canonical, SMAD-independent TGF-beta signaling pathways. This chain is TGF-beta receptor type-2 (TGFBR2), found in Sus scrofa (Pig).